Reading from the N-terminus, the 163-residue chain is Large ribosomal subunit protein uL10 (163 aa).

The protein belongs to the universal ribosomal protein uL10 family. As to quaternary structure, part of the ribosomal stalk of the 50S ribosomal subunit. The N-terminus interacts with L11 and the large rRNA to form the base of the stalk. The C-terminus forms an elongated spine to which L12 dimers bind in a sequential fashion forming a multimeric L10(L12)X complex.

Functionally, forms part of the ribosomal stalk, playing a central role in the interaction of the ribosome with GTP-bound translation factors. In Mannheimia succiniciproducens (strain KCTC 0769BP / MBEL55E), this protein is Large ribosomal subunit protein uL10.